We begin with the raw amino-acid sequence, 276 residues long: Pantothenate synthetase (276 aa).

Position 27-34 (Met27–His34) interacts with ATP. The active-site Proton donor is His34. Gln58 provides a ligand contact to (R)-pantoate. Residue Gln58 participates in beta-alanine binding. An ATP-binding site is contributed by Gly147–Asp150. A (R)-pantoate-binding site is contributed by Gln153. Residues Val176 and Leu184 to Arg187 each bind ATP.

The protein belongs to the pantothenate synthetase family. Homodimer.

It is found in the cytoplasm. It catalyses the reaction (R)-pantoate + beta-alanine + ATP = (R)-pantothenate + AMP + diphosphate + H(+). Its pathway is cofactor biosynthesis; (R)-pantothenate biosynthesis; (R)-pantothenate from (R)-pantoate and beta-alanine: step 1/1. In terms of biological role, catalyzes the condensation of pantoate with beta-alanine in an ATP-dependent reaction via a pantoyl-adenylate intermediate. This is Pantothenate synthetase from Helicobacter pylori (strain G27).